The chain runs to 506 residues: UDP-N-acetylmuramoyl-L-alanyl-D-glutamate--2,6-diaminopimelate ligase (506 aa).

Serine 42 provides a ligand contact to UDP-N-acetyl-alpha-D-muramoyl-L-alanyl-D-glutamate. ATP is bound at residue 125–131 (GTSGKTT). UDP-N-acetyl-alpha-D-muramoyl-L-alanyl-D-glutamate-binding positions include 166 to 167 (TT), serine 193, and arginine 201. At lysine 233 the chain carries N6-carboxylysine. Meso-2,6-diaminopimelate contacts are provided by residues arginine 395, 419-422 (DNPR), glycine 475, and glutamate 479. The Meso-diaminopimelate recognition motif signature appears at 419-422 (DNPR).

This sequence belongs to the MurCDEF family. MurE subfamily. Requires Mg(2+) as cofactor. Carboxylation is probably crucial for Mg(2+) binding and, consequently, for the gamma-phosphate positioning of ATP.

Its subcellular location is the cytoplasm. The enzyme catalyses UDP-N-acetyl-alpha-D-muramoyl-L-alanyl-D-glutamate + meso-2,6-diaminopimelate + ATP = UDP-N-acetyl-alpha-D-muramoyl-L-alanyl-gamma-D-glutamyl-meso-2,6-diaminopimelate + ADP + phosphate + H(+). It participates in cell wall biogenesis; peptidoglycan biosynthesis. Its function is as follows. Catalyzes the addition of meso-diaminopimelic acid to the nucleotide precursor UDP-N-acetylmuramoyl-L-alanyl-D-glutamate (UMAG) in the biosynthesis of bacterial cell-wall peptidoglycan. The chain is UDP-N-acetylmuramoyl-L-alanyl-D-glutamate--2,6-diaminopimelate ligase from Streptomyces avermitilis (strain ATCC 31267 / DSM 46492 / JCM 5070 / NBRC 14893 / NCIMB 12804 / NRRL 8165 / MA-4680).